The sequence spans 117 residues: Fluoride-specific ion channel FluC 2 (117 aa).

2 consecutive transmembrane segments (helical) span residues 1 to 21 (MISI…RSAI) and 46 to 66 (FLIG…AFFV). Positions 71 and 74 each coordinate Na(+). A helical membrane pass occupies residues 95–115 (LFLNYSLLQFIIGFIACYIGY).

This sequence belongs to the fluoride channel Fluc/FEX (TC 1.A.43) family.

It is found in the cell membrane. The enzyme catalyses fluoride(in) = fluoride(out). Na(+) is not transported, but it plays an essential structural role and its presence is essential for fluoride channel function. Fluoride-specific ion channel. Important for reducing fluoride concentration in the cell, thus reducing its toxicity. This is Fluoride-specific ion channel FluC 2 from Staphylococcus aureus (strain Mu50 / ATCC 700699).